Reading from the N-terminus, the 416-residue chain is Probable mannose-6-phosphate isomerase (416 aa).

Zn(2+) contacts are provided by Gln99, His101, Glu126, and His259. Arg278 is a catalytic residue.

This sequence belongs to the mannose-6-phosphate isomerase type 1 family. Zn(2+) serves as cofactor.

It localises to the cytoplasm. The catalysed reaction is D-mannose 6-phosphate = D-fructose 6-phosphate. It participates in nucleotide-sugar biosynthesis; GDP-alpha-D-mannose biosynthesis; alpha-D-mannose 1-phosphate from D-fructose 6-phosphate: step 1/2. Functionally, involved in the synthesis of the GDP-mannose and dolichol-phosphate-mannose required for a number of critical mannosyl transfer reactions. This is Probable mannose-6-phosphate isomerase from Caenorhabditis elegans.